Consider the following 328-residue polypeptide: Pancreas transcription factor 1 subunit alpha (328 aa).

One can recognise a bHLH domain in the interval 163-215 (QLRQAANVRERRRMQSINDAFEGLRSHIPTLPYEKRLSKVDTLRLAIGYINFL). Disordered regions lie at residues 259-278 (RGTR…PLAG) and 305-328 (DPRK…EFVS).

As to quaternary structure, component of the pancreas transcription factor 1 complex (PTF1) which is composed of TCF3/p75, TCF12/p64 and PTF1A/p48. TCF3 is responsible for the nuclear import of the p48/p64 complex. Interacts with TCF3 and RBPSUH/RBP-Jkappa. In terms of tissue distribution, pancreas-specific (at protein level). Loss of expression is seen in ductal type pancreas cancers.

Its subcellular location is the nucleus. It localises to the cytoplasm. Its function is as follows. Transcription factor implicated in the cell fate determination in various organs. Binds to the E-box consensus sequence 5'-CANNTG-3'. Plays a role in early and late pancreas development and differentiation. Important for determining whether cells allocated to the pancreatic buds continue towards pancreatic organogenesis or revert back to duodenal fates. May be involved in the maintenance of exocrine pancreas-specific gene expression including ELA1 and amylase. Required for the formation of pancreatic acinar and ductal cells. Plays an important role in cerebellar development. Directly regulated by FOXN4 and RORC during retinal development, FOXN4-PTF1A pathway plays a central role in directing the differentiation of retinal progenitors towards horizontal and amacrine fates. The polypeptide is Pancreas transcription factor 1 subunit alpha (PTF1A) (Homo sapiens (Human)).